Consider the following 225-residue polypeptide: ATP-dependent Clp protease proteolytic subunit (225 aa).

The active-site Nucleophile is serine 123. Histidine 148 is an active-site residue.

The protein belongs to the peptidase S14 family. As to quaternary structure, fourteen ClpP subunits assemble into 2 heptameric rings which stack back to back to give a disk-like structure with a central cavity, resembling the structure of eukaryotic proteasomes.

Its subcellular location is the cytoplasm. The enzyme catalyses Hydrolysis of proteins to small peptides in the presence of ATP and magnesium. alpha-casein is the usual test substrate. In the absence of ATP, only oligopeptides shorter than five residues are hydrolyzed (such as succinyl-Leu-Tyr-|-NHMec, and Leu-Tyr-Leu-|-Tyr-Trp, in which cleavage of the -Tyr-|-Leu- and -Tyr-|-Trp bonds also occurs).. Cleaves peptides in various proteins in a process that requires ATP hydrolysis. Has a chymotrypsin-like activity. Plays a major role in the degradation of misfolded proteins. The polypeptide is ATP-dependent Clp protease proteolytic subunit (Chlorobium chlorochromatii (strain CaD3)).